We begin with the raw amino-acid sequence, 196 residues long: Aequorin-2 (196 aa).

Residues 1-7 (MTSKQYS) constitute a propeptide that is removed on maturation. 4 EF-hand domains span residues 18–53 (RWIG…IVIN), 54–108 (NLGA…AKNE), 117–146 (DALF…AGII), and 147–182 (QSSE…FWYT). Residues Asp31, Asn33, Asn35, Lys37, and Glu42 each coordinate Ca(2+). May interact with the chromophore stretches follow at residues 47–57 (ASDIVINNLGA), 62–72 (AKRHKDAVEAF), and 107–117 (NEPTLIRIWGD). Residues Asp124, Asp126, Asn128, Glu135, Asp160, Asp162, Ser164, Gln166, and Glu171 each contribute to the Ca(2+) site.

Belongs to the aequorin family. Post-translationally, the reduction of the disulfide bond is necessary to regenerate aequorin from apoaequorin.

Ca(2+)-dependent bioluminescence photoprotein. Displays an emission peak at 470 nm (blue light). Trace amounts of calcium ion trigger the intramolecular oxidation of the chromophore, coelenterazine into coelenteramide and CO(2) with the concomitant emission of light. In Aequorea victoria (Water jellyfish), this protein is Aequorin-2.